A 236-amino-acid chain; its full sequence is NADH-quinone oxidoreductase subunit C (236 aa).

Residues 1-20 (MSPPNQDAQEGRPDSPTAEV) form a disordered region.

It belongs to the complex I 30 kDa subunit family. NDH-1 is composed of 14 different subunits. Subunits NuoB, C, D, E, F, and G constitute the peripheral sector of the complex.

The protein localises to the cell membrane. The catalysed reaction is a quinone + NADH + 5 H(+)(in) = a quinol + NAD(+) + 4 H(+)(out). In terms of biological role, NDH-1 shuttles electrons from NADH, via FMN and iron-sulfur (Fe-S) centers, to quinones in the respiratory chain. The immediate electron acceptor for the enzyme in this species is believed to be a menaquinone. Couples the redox reaction to proton translocation (for every two electrons transferred, four hydrogen ions are translocated across the cytoplasmic membrane), and thus conserves the redox energy in a proton gradient. The sequence is that of NADH-quinone oxidoreductase subunit C from Mycobacterium tuberculosis (strain ATCC 25177 / H37Ra).